A 403-amino-acid chain; its full sequence is 8-amino-7-oxononanoate synthase (403 aa).

Arg30 contributes to the substrate binding site. A pyridoxal 5'-phosphate-binding site is contributed by 121–122; that stretch reads GY. His146 is a binding site for substrate. 3 residues coordinate pyridoxal 5'-phosphate: Ser192, His220, and Thr248. Position 251 is an N6-(pyridoxal phosphate)lysine (Lys251). Substrate is bound at residue Thr367.

The protein belongs to the class-II pyridoxal-phosphate-dependent aminotransferase family. BioF subfamily. As to quaternary structure, homodimer. Pyridoxal 5'-phosphate serves as cofactor.

The catalysed reaction is 6-carboxyhexanoyl-[ACP] + L-alanine + H(+) = (8S)-8-amino-7-oxononanoate + holo-[ACP] + CO2. The protein operates within cofactor biosynthesis; biotin biosynthesis. Catalyzes the decarboxylative condensation of pimeloyl-[acyl-carrier protein] and L-alanine to produce 8-amino-7-oxononanoate (AON), [acyl-carrier protein], and carbon dioxide. This is 8-amino-7-oxononanoate synthase from Burkholderia vietnamiensis (strain G4 / LMG 22486) (Burkholderia cepacia (strain R1808)).